A 421-amino-acid chain; its full sequence is Histidine--tRNA ligase (421 aa).

Belongs to the class-II aminoacyl-tRNA synthetase family.

It is found in the cytoplasm. The enzyme catalyses tRNA(His) + L-histidine + ATP = L-histidyl-tRNA(His) + AMP + diphosphate + H(+). The polypeptide is Histidine--tRNA ligase (Pyrobaculum calidifontis (strain DSM 21063 / JCM 11548 / VA1)).